The chain runs to 992 residues: Disks large-associated protein 1 (992 aa).

Disordered regions lie at residues 154–209 (SLEG…SWWS) and 355–375 (KAMG…SPKV). Residue S169 is modified to Phosphoserine. Low complexity predominate over residues 195-209 (SNASNASPTSPSWWS). S362, S365, S368, S372, S389, S418, S421, S425, S428, S437, S509, S516, and S578 each carry phosphoserine. The residue at position 579 (T579) is a Phosphothreonine. S581 and S605 each carry phosphoserine. T606 is subject to Phosphothreonine. Residues S608 and S611 each carry the phosphoserine modification. 2 interaction with DYL2 regions span residues 665 to 676 (LSIGIQVDDAEE) and 687 to 698 (SKFQSVGVQVEE). The interval 914–980 (WKQMDPLDKK…QNSATESAES (67 aa)) is disordered. Basic and acidic residues-rich tracts occupy residues 918 to 927 (DPLDKKERRA) and 943 to 958 (IRER…EARK). S947 carries the post-translational modification Phosphoserine. Polar residues predominate over residues 969 to 978 (VRQNSATESA). The PDZ-binding motif lies at 990-992 (TRL).

It belongs to the SAPAP family. As to quaternary structure, interacts with guanylate kinase-like domain of DLG1, DLG2, DLG3, DLG4 and AIP1. Interacts with the PDZ domain of SHANK1, SHANK2 and SHANK3. Found in a complex with DLG4 and SHANK1, SHANK2 or SHANK3. Found in a complex with DLG4 and BEGAIN. Interacts with DYL2 and LRFN1. Interacts with MPP2 (via the SH3-Guanylate kinase-like sub-module). Post-translationally, ubiquitinated by TRIM3; leading to proteasomal degradation. Expressed in brain and testis.

The protein resides in the cell membrane. It is found in the postsynaptic density. The protein localises to the synapse. Its function is as follows. Part of the postsynaptic scaffold in neuronal cells. The polypeptide is Disks large-associated protein 1 (Rattus norvegicus (Rat)).